A 92-amino-acid polypeptide reads, in one-letter code: uncharacterized protein (92 aa).

This is an uncharacterized protein from Methanocaldococcus jannaschii (strain ATCC 43067 / DSM 2661 / JAL-1 / JCM 10045 / NBRC 100440) (Methanococcus jannaschii).